A 141-amino-acid chain; its full sequence is Large ribosomal subunit protein uL16 (141 aa).

The segment covering 1–17 (MLMPKRTKFRKQMKGRN) has biased composition (basic residues). The disordered stretch occupies residues 1–22 (MLMPKRTKFRKQMKGRNRGYAT).

The protein belongs to the universal ribosomal protein uL16 family. As to quaternary structure, part of the 50S ribosomal subunit.

Functionally, binds 23S rRNA and is also seen to make contacts with the A and possibly P site tRNAs. The polypeptide is Large ribosomal subunit protein uL16 (Campylobacter curvus (strain 525.92)).